The primary structure comprises 293 residues: Transcription initiation factor IIB 2 (293 aa).

The TFIIB-type zinc finger occupies 1–31 (MKCPYCKTDNAITYDVEKGMYVCTNCASVIE). The Zn(2+) site is built by Cys3, Cys6, Cys23, and Cys26. A run of 2 repeats spans residues 107–193 (SILN…ANSI) and 204–285 (EYIP…DIVD).

This sequence belongs to the TFIIB family.

Stabilizes TBP binding to an archaeal box-A promoter. Also responsible for recruiting RNA polymerase II to the pre-initiation complex (DNA-TBP-TFIIB). This is Transcription initiation factor IIB 2 from Saccharolobus solfataricus (strain ATCC 35092 / DSM 1617 / JCM 11322 / P2) (Sulfolobus solfataricus).